The sequence spans 465 residues: Soluble pyridine nucleotide transhydrogenase (465 aa).

36–45 (ERYNNVGGGC) lines the FAD pocket.

It belongs to the class-I pyridine nucleotide-disulfide oxidoreductase family. Requires FAD as cofactor.

The protein resides in the cytoplasm. The catalysed reaction is NAD(+) + NADPH = NADH + NADP(+). Conversion of NADPH, generated by peripheral catabolic pathways, to NADH, which can enter the respiratory chain for energy generation. The protein is Soluble pyridine nucleotide transhydrogenase of Serratia proteamaculans (strain 568).